Consider the following 431-residue polypeptide: Ribosomal protein uS12 methylthiotransferase RimO (431 aa).

Residues 4-120 (HKLFLLSLGC…ILAALGAAYH (117 aa)) form the MTTase N-terminal domain. [4Fe-4S] cluster is bound by residues Cys-13, Cys-49, Cys-83, Cys-144, Cys-148, and Cys-151. In terms of domain architecture, Radical SAM core spans 130–359 (LTPPHYTYLK…MELQESVSQD (230 aa)). The region spanning 362 to 429 (RDFEGKEITV…PFDLVGEVIG (68 aa)) is the TRAM domain.

This sequence belongs to the methylthiotransferase family. RimO subfamily. The cofactor is [4Fe-4S] cluster.

The protein localises to the cytoplasm. It carries out the reaction L-aspartate(89)-[ribosomal protein uS12]-hydrogen + (sulfur carrier)-SH + AH2 + 2 S-adenosyl-L-methionine = 3-methylsulfanyl-L-aspartate(89)-[ribosomal protein uS12]-hydrogen + (sulfur carrier)-H + 5'-deoxyadenosine + L-methionine + A + S-adenosyl-L-homocysteine + 2 H(+). Functionally, catalyzes the methylthiolation of an aspartic acid residue of ribosomal protein uS12. This chain is Ribosomal protein uS12 methylthiotransferase RimO, found in Pelodictyon phaeoclathratiforme (strain DSM 5477 / BU-1).